Here is a 282-residue protein sequence, read N- to C-terminus: Kallikrein-11 (282 aa).

The signal sequence occupies residues 1–50 (MQRLRWLRDWKSSGRGLTAAKEPGARSSPLQAMRILQLILLALATGLVGG). A propeptide spans 51–53 (ETR) (activation peptide). The 228-residue stretch at 53-280 (RIIKGFECKP…YVDWIQETMK (228 aa)) folds into the Peptidase S1 domain. Cystine bridges form between C60/C195, C79/C95, C167/C269, C174/C241, C206/C220, and C231/C256. Residue H94 is the Charge relay system of the active site. N131 carries N-linked (GlcNAc...) asparagine glycosylation. D142 acts as the Charge relay system in catalysis. 2 N-linked (GlcNAc...) asparagine glycosylation sites follow: N197 and N213. The Charge relay system role is filled by S235. Residue N242 is glycosylated (N-linked (GlcNAc...) asparagine).

The protein belongs to the peptidase S1 family. Kallikrein subfamily. Post-translationally, about 40% of KLK11 is inactivated by internal cleavage after Arg-188. This proteolytic inactivation may be effected by plasminogen. In terms of tissue distribution, expressed in brain, skin and prostate. Isoform 1 is expressed preferentially in brain. Isoform 2 is expressed in prostate. Present in seminal plasma at concentrations ranging from 2 to 37 microg/mL (at protein level).

The protein resides in the secreted. The protein localises to the golgi apparatus. Its function is as follows. Possible multifunctional protease. Efficiently cleaves 'bz-Phe-Arg-4-methylcoumaryl-7-amide', a kallikrein substrate, and weakly cleaves other substrates for kallikrein and trypsin. Cleaves synthetic peptides after arginine but not lysine residues. This is Kallikrein-11 (KLK11) from Homo sapiens (Human).